We begin with the raw amino-acid sequence, 358 residues long: Photosystem II protein D1 3 (358 aa).

3 consecutive transmembrane segments (helical) span residues 28-45 (YIGW…AATT), 117-132 (HFLI…QWEL), and 141-155 (WICV…AAMA). H117 contacts chlorophyll a. A pheophytin a-binding site is contributed by Y125. D169 and E188 together coordinate [CaMn4O5] cluster. The helical transmembrane segment at 196-217 (FHMLGVAGVFGGSLFSAMHGSL) threads the bilayer. Chlorophyll a is bound at residue H197. A quinone-binding positions include H214 and 263–264 (SF). Position 214 (H214) interacts with Fe cation. H271 is a Fe cation binding site. Residues 273-287 (LLGAWPVVGIWFTSM) traverse the membrane as a helical segment. Residues H331, E332, D341, and A343 each coordinate [CaMn4O5] cluster. Positions 344–358 (TVESTPVALQAPAIG) are excised as a propeptide.

This sequence belongs to the reaction center PufL/M/PsbA/D family. In terms of assembly, PSII is composed of 1 copy each of membrane proteins PsbA, PsbB, PsbC, PsbD, PsbE, PsbF, PsbH, PsbI, PsbJ, PsbK, PsbL, PsbM, PsbT, PsbX, PsbY, PsbZ, Psb30/Ycf12, peripheral proteins PsbO, CyanoQ (PsbQ), PsbU, PsbV and a large number of cofactors. It forms dimeric complexes. It depends on The D1/D2 heterodimer binds P680, chlorophylls that are the primary electron donor of PSII, and subsequent electron acceptors. It shares a non-heme iron and each subunit binds pheophytin, quinone, additional chlorophylls, carotenoids and lipids. D1 provides most of the ligands for the Mn4-Ca-O5 cluster of the oxygen-evolving complex (OEC). There is also a Cl(-1) ion associated with D1 and D2, which is required for oxygen evolution. The PSII complex binds additional chlorophylls, carotenoids and specific lipids. as a cofactor. In terms of processing, tyr-160 forms a radical intermediate that is referred to as redox-active TyrZ, YZ or Y-Z. Post-translationally, C-terminally processed by CtpA; processing is essential to allow assembly of the oxygen-evolving complex and thus photosynthetic growth.

The protein localises to the cellular thylakoid membrane. The enzyme catalyses 2 a plastoquinone + 4 hnu + 2 H2O = 2 a plastoquinol + O2. Functionally, photosystem II (PSII) is a light-driven water:plastoquinone oxidoreductase that uses light energy to abstract electrons from H(2)O, generating O(2) and a proton gradient subsequently used for ATP formation. It consists of a core antenna complex that captures photons, and an electron transfer chain that converts photonic excitation into a charge separation. The D1/D2 (PsbA/PsbD) reaction center heterodimer binds P680, the primary electron donor of PSII as well as several subsequent electron acceptors. The chain is Photosystem II protein D1 3 from Synechococcus sp. (strain CC9311).